The chain runs to 122 residues: Large ribosomal subunit protein bL12 (122 aa).

It belongs to the bacterial ribosomal protein bL12 family. As to quaternary structure, homodimer. Part of the ribosomal stalk of the 50S ribosomal subunit. Forms a multimeric L10(L12)X complex, where L10 forms an elongated spine to which 2 to 4 L12 dimers bind in a sequential fashion. Binds GTP-bound translation factors.

Forms part of the ribosomal stalk which helps the ribosome interact with GTP-bound translation factors. Is thus essential for accurate translation. The chain is Large ribosomal subunit protein bL12 from Stenotrophomonas maltophilia (strain R551-3).